We begin with the raw amino-acid sequence, 1513 residues long: DNA-directed RNA polymerase subunit beta'' (1513 aa).

Residues Cys-220, Cys-296, Cys-303, and Cys-306 each contribute to the Zn(2+) site. The segment at Arg-644–Val-769 is disordered. The span at Asn-659 to Glu-679 shows a compositional bias: basic and acidic residues. A compositionally biased stretch (acidic residues) spans Glu-680 to Glu-707. Basic and acidic residues predominate over residues Asn-726–Thr-737. Residues Leu-738–Asp-767 show a composition bias toward acidic residues.

Belongs to the RNA polymerase beta' chain family. RpoC2 subfamily. As to quaternary structure, in plastids the minimal PEP RNA polymerase catalytic core is composed of four subunits: alpha, beta, beta', and beta''. When a (nuclear-encoded) sigma factor is associated with the core the holoenzyme is formed, which can initiate transcription. Zn(2+) serves as cofactor.

The protein resides in the plastid. It localises to the chloroplast. The enzyme catalyses RNA(n) + a ribonucleoside 5'-triphosphate = RNA(n+1) + diphosphate. In terms of biological role, DNA-dependent RNA polymerase catalyzes the transcription of DNA into RNA using the four ribonucleoside triphosphates as substrates. This is DNA-directed RNA polymerase subunit beta'' from Oryza nivara (Indian wild rice).